The following is a 248-amino-acid chain: Malonyl-[acyl-carrier protein] O-methyltransferase 2 (248 aa).

Belongs to the methyltransferase superfamily.

It catalyses the reaction malonyl-[ACP] + S-adenosyl-L-methionine = malonyl-[ACP] methyl ester + S-adenosyl-L-homocysteine. Its pathway is cofactor biosynthesis; biotin biosynthesis. Functionally, converts the free carboxyl group of a malonyl-thioester to its methyl ester by transfer of a methyl group from S-adenosyl-L-methionine (SAM). It allows to synthesize pimeloyl-ACP via the fatty acid synthetic pathway. The sequence is that of Malonyl-[acyl-carrier protein] O-methyltransferase 2 from Coxiella burnetii (strain RSA 493 / Nine Mile phase I).